The chain runs to 696 residues: METKVQVEFGGRTITIETGKMAKQASGAVVVSSGDTMVLVTAVATKTAKEGQDFFPLTVNYQEKAYAGGKIPGGFFKREARPSDNETLTCRLIDRPIRPLFPENFLNDTQIMATVVSADKDNDPGILSMVGASAALMVSDIPFQGPIAGVKVGRVDGRFIANPTADEMEKSDIEIVVAASKDAVIMVEGSAAEVSEEDMLEAIFFGHAAIQPLLAAQEELCSKAGVAKREVPPPAVNEELKANVKDIAYARMKEAVRIKSKVERHNSIDAISAETLAALATEFEGCDKQIKAFLGDFEYELVREHILKDGERIDGRDTKTIRQITTEVSLLPRAHGSALFTRGETQSLVAATLGTSIDEQRIDSLFGESKKRFLLHYNFPPFSVGETSFRLGPGRREIGHGMLAERALARVLPKHDDFPYTIRIVSDILESNGSSSMASVCGGSMSMMDAGIPIKAPVAGIAMGLIKEGEDFAILSDILGDEDHLGDMDFKVAGTAEGVTALQMDIKIGGVTREIMGIALKQALEGRLHILGRMADTIKTSKSDLSTYAPRITTIYVKTDKIRDVIGSGGKNIRGITEATGVTIDIDDTGKINIASTDKAACDLAIKMIRDLTAEAEEGKLYMGLVKKVMEFGAFVEIFPGTDGLVHISELDTERVKNVTDILKEGDKVLVKCIGIDKQGKIKLSRKEALGATLPE.

The Mg(2+) site is built by D483 and D489. One can recognise a KH domain in the interval 550–609; that stretch reads PRITTIYVKTDKIRDVIGSGGKNIRGITEATGVTIDIDDTGKINIASTDKAACDLAIKMI. One can recognise an S1 motif domain in the interval 619 to 687; the sequence is GKLYMGLVKK…KQGKIKLSRK (69 aa).

This sequence belongs to the polyribonucleotide nucleotidyltransferase family. The cofactor is Mg(2+).

The protein resides in the cytoplasm. It catalyses the reaction RNA(n+1) + phosphate = RNA(n) + a ribonucleoside 5'-diphosphate. Involved in mRNA degradation. Catalyzes the phosphorolysis of single-stranded polyribonucleotides processively in the 3'- to 5'-direction. The sequence is that of Polyribonucleotide nucleotidyltransferase from Geotalea uraniireducens (strain Rf4) (Geobacter uraniireducens).